A 466-amino-acid polypeptide reads, in one-letter code: GTPase Der (466 aa).

2 consecutive EngA-type G domains span residues 30-193 and 203-376; these read PVVA…PEVS and RRVA…ASWD. GTP is bound by residues 36-43, 83-87, 145-148, 209-216, 256-260, and 321-324; these read GRPNVGKS, DTGGW, NKVD, GKPNVGKS, DTAGL, and NKWD. Residues 377–459 form the KH-like domain; the sequence is TRIATGPLNS…PIRINVRVRE (83 aa).

It belongs to the TRAFAC class TrmE-Era-EngA-EngB-Septin-like GTPase superfamily. EngA (Der) GTPase family. As to quaternary structure, associates with the 50S ribosomal subunit.

Its function is as follows. GTPase that plays an essential role in the late steps of ribosome biogenesis. This chain is GTPase Der, found in Mycobacterium avium (strain 104).